Reading from the N-terminus, the 256-residue chain is Small ribosomal subunit protein eS1A (256 aa).

Residue Ala-2 is modified to N-acetylalanine; partial.

It belongs to the eukaryotic ribosomal protein eS1 family. As to quaternary structure, component of the small ribosomal subunit. Mature ribosomes consist of a small (40S) and a large (60S) subunit. The 40S subunit contains about 33 different proteins and 1 molecule of RNA (18S). The 60S subunit contains about 49 different proteins and 3 molecules of RNA (25S, 5.8S and 5S).

Its subcellular location is the cytoplasm. This is Small ribosomal subunit protein eS1A from Clavispora lusitaniae (strain ATCC 42720) (Yeast).